Consider the following 421-residue polypeptide: Acetylglutamate kinase (421 aa).

Positions Met-1–Arg-252 are acetylglutamate kinase. Residues Ala-59–Gly-60, Arg-81, and Asn-170 each bind substrate. In terms of domain architecture, N-acetyltransferase spans Glu-274–Ile-420.

It in the N-terminal section; belongs to the acetylglutamate kinase family. ArgB subfamily.

It localises to the cytoplasm. It catalyses the reaction N-acetyl-L-glutamate + ATP = N-acetyl-L-glutamyl 5-phosphate + ADP. Its pathway is amino-acid biosynthesis; L-arginine biosynthesis; N(2)-acetyl-L-ornithine from L-glutamate: step 2/4. The sequence is that of Acetylglutamate kinase (argB) from Xylella fastidiosa (strain 9a5c).